A 663-amino-acid polypeptide reads, in one-letter code: uncharacterized protein (663 aa).

A signal peptide spans 1–29 (MLDIGVIGRLKFATAFMAMSLLLVPAAEA).

Belongs to the bacterial solute-binding protein 5 family.

It localises to the periplasm. In terms of biological role, possible binding-protein with either a transport or enzymatic activity. This is an uncharacterized protein from Sinorhizobium fredii (strain NBRC 101917 / NGR234).